A 375-amino-acid polypeptide reads, in one-letter code: 23S rRNA (uracil(747)-C(5))-methyltransferase RlmC (375 aa).

Residues Cys3, Cys11, Cys14, and Cys87 each coordinate [4Fe-4S] cluster. 4 residues coordinate S-adenosyl-L-methionine: Gln212, Phe241, Glu262, and Asn307. The Nucleophile role is filled by Cys334.

The protein belongs to the class I-like SAM-binding methyltransferase superfamily. RNA M5U methyltransferase family. RlmC subfamily.

It catalyses the reaction uridine(747) in 23S rRNA + S-adenosyl-L-methionine = 5-methyluridine(747) in 23S rRNA + S-adenosyl-L-homocysteine + H(+). Catalyzes the formation of 5-methyl-uridine at position 747 (m5U747) in 23S rRNA. The protein is 23S rRNA (uracil(747)-C(5))-methyltransferase RlmC of Salmonella enteritidis PT4 (strain P125109).